The sequence spans 232 residues: ATP-dependent dethiobiotin synthetase BioD (232 aa).

16-21 (GVGKTV) contacts ATP. Threonine 20 contributes to the Mg(2+) binding site. Lysine 41 is an active-site residue. Threonine 45 is a binding site for substrate. Residues aspartate 52, 111 to 114 (EGIG), 171 to 172 (NQ), 200 to 202 (PLS), and glutamate 207 contribute to the ATP site. 2 residues coordinate Mg(2+): aspartate 52 and glutamate 111.

It belongs to the dethiobiotin synthetase family. Homodimer. The cofactor is Mg(2+).

Its subcellular location is the cytoplasm. It catalyses the reaction (7R,8S)-7,8-diammoniononanoate + CO2 + ATP = (4R,5S)-dethiobiotin + ADP + phosphate + 3 H(+). It carries out the reaction (7R,8S)-8-amino-7-(carboxyamino)nonanoate + ATP = (4R,5S)-dethiobiotin + ADP + phosphate + H(+). Its pathway is cofactor biosynthesis; biotin biosynthesis; biotin from 7,8-diaminononanoate: step 1/2. Its function is as follows. Catalyzes a mechanistically unusual reaction, the ATP-dependent insertion of CO2 between the N7 and N8 nitrogen atoms of 7,8-diaminopelargonic acid (DAPA, also called 7,8-diammoniononanoate) to form a ureido ring. This archaea does not encode bioA (which catalyzes the formation of the precursor for this reaction in the cannonical pathway), instead it encodes bioU, which replaces bioA and also performs the first half of the cannonical BioD reaction. Thus in this archaea BioD has a different substrate. This is ATP-dependent dethiobiotin synthetase BioD from Haloferax mediterranei (strain ATCC 33500 / DSM 1411 / JCM 8866 / NBRC 14739 / NCIMB 2177 / R-4) (Halobacterium mediterranei).